Consider the following 137-residue polypeptide: Small ribosomal subunit protein bS16 (137 aa).

Over residues 104–118 the composition is skewed to basic and acidic residues; the sequence is ADEKKKPVLKPKTEK. The segment at 104–137 is disordered; it reads ADEKKKPVLKPKTEKAAPAPEAAAPEAESTEEQA. Low complexity predominate over residues 119 to 130; sequence AAPAPEAAAPEA.

It belongs to the bacterial ribosomal protein bS16 family.

The protein is Small ribosomal subunit protein bS16 of Clavibacter michiganensis subsp. michiganensis (strain NCPPB 382).